The sequence spans 261 residues: MASPDWGYDDKNGPEQWSKLYPIANGNNQSPVDIKTSETKHDTSLKPISVSYNPATAKEIINVGHSFHVTFEDNDNRSVLKGGPLSDSYRLFQFHFHWGSTNEHGSEHTVDGVKYSAELHLTHWNSAKYSSLAEAASKADGLAVIGVLMKVGEANPKLQKILDALQAIKTKGKRAPFTNFDPSTLLPSSLDFWTYPGSLTHPPLYESVTWIICKESISVSSEQLAQFRSLLSNVEGDNAVPMQHNNRPTQPLKGRTVRASF.

Residues 1 to 31 (MASPDWGYDDKNGPEQWSKLYPIANGNNQSP) are disordered. Alanine 2 carries the post-translational modification N-acetylalanine. Residues 4 to 261 (PDWGYDDKNG…LKGRTVRASF (258 aa)) form the Alpha-carbonic anhydrase domain. Histidine 65 (proton donor/acceptor) is an active-site residue. Zn(2+) contacts are provided by histidine 95, histidine 97, and histidine 120. Substrate is bound by residues threonine 200 and 200-201 (TH). The tract at residues 240–261 (VPMQHNNRPTQPLKGRTVRASF) is disordered.

Belongs to the alpha-carbonic anhydrase family. It depends on Zn(2+) as a cofactor.

It is found in the cytoplasm. It carries out the reaction hydrogencarbonate + H(+) = CO2 + H2O. The catalysed reaction is urea = cyanamide + H2O. Inhibited by acetazolamide. In terms of biological role, catalyzes the reversible hydration of carbon dioxide. Can hydrate cyanamide to urea. The polypeptide is Carbonic anhydrase 1 (CA1) (Gorilla gorilla gorilla (Western lowland gorilla)).